A 2406-amino-acid polypeptide reads, in one-letter code: Highly reducing polyketide synthase dmxL2 (2406 aa).

The 399-residue stretch at 1-399 (MEAFWSASKK…GTNAHAVLDD (399 aa)) folds into the Ketosynthase family 3 (KS3) domain. The active site involves Cys-130. The active-site For beta-ketoacyl synthase activity is the Cys-130. The segment at 414–476 (GHASNGTNGT…GPTDGPTSRP (63 aa)) is disordered. A compositionally biased stretch (polar residues) spans 417–448 (SNGTNGTLTNGHILNGEHTSNGMNGTLTNGHA). The tract at residues 574 to 911 (FVFTGQGAQW…LAGSLFTQGY (338 aa)) is malonyl-CoA:ACP transacylase (MAT) domain. Ser-665 (for malonyltransferase activity) is an active-site residue. The interval 962–1096 (PSLLGSPSPS…GLLVIEYEAA (135 aa)) is N-terminal hotdog fold. In terms of domain architecture, PKS/mFAS DH spans 962-1278 (PSLLGSPSPS…CAEIAGASSN (317 aa)). The interval 964 to 1273 (LLGSPSPSLA…IEGFLCAEIA (310 aa)) is dehydratase (DH) domain. The Proton acceptor; for dehydratase activity role is filled by His-994. Positions 1124 to 1278 (VHRLDPSGFY…CAEIAGASSN (155 aa)) are C-terminal hotdog fold. Asp-1189 acts as the Proton donor; for dehydratase activity in catalysis. The enoylreductase (ER) domain stretch occupies residues 1694-2006 (GMLGSVCLEP…TGKHLGKIAL (313 aa)). Residues 2032–2210 (GVYLLVGGLG…TTVDLGIMRD (179 aa)) are ketoreductase (KR) domain. Residues 2318 to 2395 (EASDSVLEAL…TFCNRIAAKS (78 aa)) enclose the Carrier domain. Ser-2355 is subject to O-(pantetheine 4'-phosphoryl)serine.

It participates in secondary metabolite biosynthesis. Highly reducing polyketide synthase; part of the gene cluster that mediates the biosynthesis of the dimeric xanthones cryptosporioptides. The pathway begins with the synthesis of atrochrysone thioester by the polyketide synthase dmx-nrPKS. The atrochrysone carboxyl ACP thioesterase dmxR1 then breaks the thioester bond and releases the atrochrysone carboxylic acid from dmx-nrPKS. Atrochrysone carboxylic acid is decarboxylated by the decarboxylase dmxR15, and oxidized by the anthrone oxygenase dmxR16 to yield emodin. Emodin is then reduced to emodin hydroquinone by the oxidoreductase dmxR7. A-ring reduction by the short chain dehydrogenase dmxR18, dehydration by the scytalone dehydratase-like protein dmxR17 and probable spontaneous re-oxidation, results in overall deoxygenation to chrysophanol. Baeyer-Villiger oxidation by the Baeyer-Villiger monooxygenase (BVMO) dmxR6 then yields monodictylactone in equilibrium with monodictyphenone. In the case of the cryptosporioptides biosynthesis, monodictylactone is reduced at C-12 to an alcohol (by the short chain dehydrogenases dmxR12 or dmxR8) and hydroxylated at C-5 by dmxR9, yielding the electron-rich aromatic which could eliminate H(2)O to form the ortho-quinonemethide, followed by tautomerisation to paraquinone and complete the formal reduction to produce the 10-methylgroup. Conjugate addition of C-4a-OH to the resulting paraquinone by the monooxygenase dmxR10 then gives cyclohexadienone, which is then reduced at C-5 by the short chain dehydrogenase dmxR3 to give the dihydroxanthone. The 6,7-epoxide in the cryptosporioptides could be introduced by the cytochrome P450 monooxygenase dmxL3. The highly reducing PKS dmxL2 manufactures butyrate, which is further carboxylated by dmxL1 to form ethylmalonate. It is not yet clear whether the carboxylation occurs while the butyrate is attached to the ACP of dmxL2, but this unusual fungal metabolite could then be esterified to O-5 by the O-acetyltransferase dmxR13. Finally, dimerization performed by dmxR5 gives the observed dimers cryptosporioptides A, B and C as the final products of the pathway. The chain is Highly reducing polyketide synthase dmxL2 from Cryptosporiopsis sp. (strain 8999).